The chain runs to 340 residues: Ferrochelatase (340 aa).

His189 and Glu292 together coordinate Fe cation.

It belongs to the ferrochelatase family.

It localises to the cytoplasm. The enzyme catalyses heme b + 2 H(+) = protoporphyrin IX + Fe(2+). Its pathway is porphyrin-containing compound metabolism; protoheme biosynthesis; protoheme from protoporphyrin-IX: step 1/1. Catalyzes the ferrous insertion into protoporphyrin IX. The chain is Ferrochelatase from Pseudomonas paraeruginosa (strain DSM 24068 / PA7) (Pseudomonas aeruginosa (strain PA7)).